Consider the following 368-residue polypeptide: Histidinol-phosphate aminotransferase 1 (368 aa).

K224 carries the N6-(pyridoxal phosphate)lysine modification.

Belongs to the class-II pyridoxal-phosphate-dependent aminotransferase family. Histidinol-phosphate aminotransferase subfamily. In terms of assembly, homodimer. The cofactor is pyridoxal 5'-phosphate.

The catalysed reaction is L-histidinol phosphate + 2-oxoglutarate = 3-(imidazol-4-yl)-2-oxopropyl phosphate + L-glutamate. It functions in the pathway amino-acid biosynthesis; L-histidine biosynthesis; L-histidine from 5-phospho-alpha-D-ribose 1-diphosphate: step 7/9. The chain is Histidinol-phosphate aminotransferase 1 (hisC1) from Rhizobium meliloti (strain 1021) (Ensifer meliloti).